The chain runs to 427 residues: UDP-N-acetylglucosamine 1-carboxyvinyltransferase (427 aa).

22-23 contacts phosphoenolpyruvate; that stretch reads KN. Position 99 (arginine 99) interacts with UDP-N-acetyl-alpha-D-glucosamine. The active-site Proton donor is the cysteine 123. A 2-(S-cysteinyl)pyruvic acid O-phosphothioketal modification is found at cysteine 123. UDP-N-acetyl-alpha-D-glucosamine contacts are provided by residues 128–132, aspartate 313, and isoleucine 335; that span reads RPIDL.

It belongs to the EPSP synthase family. MurA subfamily.

The protein resides in the cytoplasm. It carries out the reaction phosphoenolpyruvate + UDP-N-acetyl-alpha-D-glucosamine = UDP-N-acetyl-3-O-(1-carboxyvinyl)-alpha-D-glucosamine + phosphate. The protein operates within cell wall biogenesis; peptidoglycan biosynthesis. In terms of biological role, cell wall formation. Adds enolpyruvyl to UDP-N-acetylglucosamine. This is UDP-N-acetylglucosamine 1-carboxyvinyltransferase from Sphingopyxis alaskensis (strain DSM 13593 / LMG 18877 / RB2256) (Sphingomonas alaskensis).